The chain runs to 131 residues: 14.7 kDa heat shock protein (131 aa).

The segment covering 1-11 (MSRNMEVNAGS) has biased composition (polar residues). Positions 1-20 (MSRNMEVNAGSSGEIPSPIR) are disordered. A sHSP domain is found at 22-131 (RFQKSGSQAV…INVKERILHY (110 aa)).

The protein belongs to the small heat shock protein (HSP20) family. As to quaternary structure, may form oligomeric structures.

The protein resides in the cytoplasm. The polypeptide is 14.7 kDa heat shock protein (HSP14.7) (Arabidopsis thaliana (Mouse-ear cress)).